We begin with the raw amino-acid sequence, 340 residues long: Probable rRNA-processing protein EBP2 homolog (340 aa).

The segment covering 1–10 (MVRKMNKLAK) has biased composition (basic residues). Disordered stretches follow at residues 1–59 (MVRK…DDDE) and 245–340 (HGLD…RGRR). Composition is skewed to acidic residues over residues 23-37 (PESDSDGSEFDFDNA) and 46-59 (MDIEEVESDGDDDE). Residues 206-245 (QKEVLAAKNTEKKNLAEAVKKHKKGMKQQLEDMLNNVKRH) adopt a coiled-coil conformation. 2 stretches are compositionally biased toward gly residues: residues 264–277 (GRGGAGRGGAGRGG) and 318–333 (PRGGFGGRGRGGGRGG).

This sequence belongs to the EBP2 family.

Its subcellular location is the nucleus. The protein resides in the nucleolus. Functionally, required for the processing of the 27S pre-rRNA. The sequence is that of Probable rRNA-processing protein EBP2 homolog from Caenorhabditis elegans.